The following is a 181-amino-acid chain: ATP-dependent protease subunit HslV (181 aa).

Thr6 is a catalytic residue. Positions 162, 165, and 168 each coordinate Na(+).

The protein belongs to the peptidase T1B family. HslV subfamily. In terms of assembly, a double ring-shaped homohexamer of HslV is capped on each side by a ring-shaped HslU homohexamer. The assembly of the HslU/HslV complex is dependent on binding of ATP.

The protein resides in the cytoplasm. The catalysed reaction is ATP-dependent cleavage of peptide bonds with broad specificity.. Its activity is regulated as follows. Allosterically activated by HslU binding. Functionally, protease subunit of a proteasome-like degradation complex believed to be a general protein degrading machinery. The sequence is that of ATP-dependent protease subunit HslV from Solidesulfovibrio magneticus (strain ATCC 700980 / DSM 13731 / RS-1) (Desulfovibrio magneticus).